A 131-amino-acid chain; its full sequence is UPF0102 protein CYA_0708 (131 aa).

It belongs to the UPF0102 family.

This chain is UPF0102 protein CYA_0708, found in Synechococcus sp. (strain JA-3-3Ab) (Cyanobacteria bacterium Yellowstone A-Prime).